The primary structure comprises 417 residues: Tol-Pal system protein TolB (417 aa).

An N-terminal signal peptide occupies residues 1 to 16 (MRYLWLFLIHTIGLFA).

Belongs to the TolB family. In terms of assembly, the Tol-Pal system is composed of five core proteins: the inner membrane proteins TolA, TolQ and TolR, the periplasmic protein TolB and the outer membrane protein Pal. They form a network linking the inner and outer membranes and the peptidoglycan layer.

The protein resides in the periplasm. Functionally, part of the Tol-Pal system, which plays a role in outer membrane invagination during cell division and is important for maintaining outer membrane integrity. The sequence is that of Tol-Pal system protein TolB from Helicobacter pylori (strain ATCC 700392 / 26695) (Campylobacter pylori).